The sequence spans 150 residues: UPF0208 membrane protein VC_1099 (150 aa).

The next 2 membrane-spanning stretches (helical) occupy residues 42 to 62 (FAIK…MVFA) and 70 to 90 (AIVV…WLGH).

The protein belongs to the UPF0208 family.

It localises to the cell inner membrane. This is UPF0208 membrane protein VC_1099 from Vibrio cholerae serotype O1 (strain ATCC 39315 / El Tor Inaba N16961).